A 311-amino-acid chain; its full sequence is tRNA-cytidine(32) 2-sulfurtransferase (311 aa).

Positions S45 to S50 match the PP-loop motif motif. The [4Fe-4S] cluster site is built by C120, C123, and C211.

It belongs to the TtcA family. As to quaternary structure, homodimer. Mg(2+) is required as a cofactor. It depends on [4Fe-4S] cluster as a cofactor.

The protein resides in the cytoplasm. It catalyses the reaction cytidine(32) in tRNA + S-sulfanyl-L-cysteinyl-[cysteine desulfurase] + AH2 + ATP = 2-thiocytidine(32) in tRNA + L-cysteinyl-[cysteine desulfurase] + A + AMP + diphosphate + H(+). The protein operates within tRNA modification. In terms of biological role, catalyzes the ATP-dependent 2-thiolation of cytidine in position 32 of tRNA, to form 2-thiocytidine (s(2)C32). The sulfur atoms are provided by the cysteine/cysteine desulfurase (IscS) system. This chain is tRNA-cytidine(32) 2-sulfurtransferase, found in Shewanella pealeana (strain ATCC 700345 / ANG-SQ1).